Consider the following 124-residue polypeptide: Putative iron-sulfur cluster insertion protein ErpA (124 aa).

The iron-sulfur cluster site is built by C52, C116, and C118.

Belongs to the HesB/IscA family. In terms of assembly, homodimer. Requires iron-sulfur cluster as cofactor.

Required for insertion of 4Fe-4S clusters. The sequence is that of Putative iron-sulfur cluster insertion protein ErpA from Ralstonia pickettii (strain 12J).